Here is a 288-residue protein sequence, read N- to C-terminus: Bifunctional protein FolD (288 aa).

Residues 166 to 168 (GRS), serine 191, and isoleucine 232 each bind NADP(+).

This sequence belongs to the tetrahydrofolate dehydrogenase/cyclohydrolase family. As to quaternary structure, homodimer.

It carries out the reaction (6R)-5,10-methylene-5,6,7,8-tetrahydrofolate + NADP(+) = (6R)-5,10-methenyltetrahydrofolate + NADPH. It catalyses the reaction (6R)-5,10-methenyltetrahydrofolate + H2O = (6R)-10-formyltetrahydrofolate + H(+). It functions in the pathway one-carbon metabolism; tetrahydrofolate interconversion. In terms of biological role, catalyzes the oxidation of 5,10-methylenetetrahydrofolate to 5,10-methenyltetrahydrofolate and then the hydrolysis of 5,10-methenyltetrahydrofolate to 10-formyltetrahydrofolate. The chain is Bifunctional protein FolD from Rickettsia africae (strain ESF-5).